The following is a 232-amino-acid chain: Sugar fermentation stimulation protein homolog (232 aa).

It belongs to the SfsA family.

This Brucella anthropi (strain ATCC 49188 / DSM 6882 / CCUG 24695 / JCM 21032 / LMG 3331 / NBRC 15819 / NCTC 12168 / Alc 37) (Ochrobactrum anthropi) protein is Sugar fermentation stimulation protein homolog.